Reading from the N-terminus, the 1332-residue chain is Elongator complex protein 1 (1332 aa).

5 positions are modified to phosphoserine: S471, S804, S867, S1171, and S1174. The interval 885-1332 is mediates dimerization; it reads VDVNELYDHS…RTQWKLSLLD (448 aa). Residues 1150–1208 are disordered; that stretch reads QAGLDDEVPHGQESDLFSETSSVVSGSEMSGKYSHSNSRISARSSKNRRKAERKKHSLK. The span at 1164 to 1177 shows a compositional bias: polar residues; the sequence is DLFSETSSVVSGSE. A required for binding to tRNA region spans residues 1191 to 1209; it reads ARSSKNRRKAERKKHSLKE. Over residues 1194 to 1206 the composition is skewed to basic residues; it reads SKNRRKAERKKHS.

The protein belongs to the ELP1/IKA1 family. As to quaternary structure, homodimer; dimerization promotes ELP1 stability and elongator complex formation. Component of the elongator complex which consists of ELP1, ELP2, ELP3, ELP4, ELP5 and ELP6. Interacts preferentially with MAP3K14/NIK followed by IKK-alpha and IKK-beta.

The protein localises to the cytoplasm. The protein resides in the nucleus. Its pathway is tRNA modification; 5-methoxycarbonylmethyl-2-thiouridine-tRNA biosynthesis. Its function is as follows. Component of the elongator complex which is required for multiple tRNA modifications, including mcm5U (5-methoxycarbonylmethyl uridine), mcm5s2U (5-methoxycarbonylmethyl-2-thiouridine), and ncm5U (5-carbamoylmethyl uridine). The elongator complex catalyzes the formation of carboxymethyluridine in the wobble base at position 34 in tRNAs. Regulates the migration and branching of projection neurons in the developing cerebral cortex, through a process depending on alpha-tubulin acetylation. ELP1 binds to tRNA, mediating interaction of the elongator complex with tRNA. May act as a scaffold protein that assembles active IKK-MAP3K14 complexes (IKKA, IKKB and MAP3K14/NIK). In Homo sapiens (Human), this protein is Elongator complex protein 1.